The sequence spans 326 residues: Iron-sulfur cluster assembly SufBD family protein PH0883 (326 aa).

This sequence belongs to the iron-sulfur cluster assembly SufBD family.

The polypeptide is Iron-sulfur cluster assembly SufBD family protein PH0883 (Pyrococcus horikoshii (strain ATCC 700860 / DSM 12428 / JCM 9974 / NBRC 100139 / OT-3)).